We begin with the raw amino-acid sequence, 214 residues long: Probable nicotinate-nucleotide adenylyltransferase (214 aa).

Belongs to the NadD family.

It carries out the reaction nicotinate beta-D-ribonucleotide + ATP + H(+) = deamido-NAD(+) + diphosphate. Its pathway is cofactor biosynthesis; NAD(+) biosynthesis; deamido-NAD(+) from nicotinate D-ribonucleotide: step 1/1. Functionally, catalyzes the reversible adenylation of nicotinate mononucleotide (NaMN) to nicotinic acid adenine dinucleotide (NaAD). The polypeptide is Probable nicotinate-nucleotide adenylyltransferase (Buchnera aphidicola subsp. Acyrthosiphon pisum (strain Tuc7)).